The sequence spans 607 residues: Aspartate--tRNA(Asp/Asn) ligase (607 aa).

L-aspartate is bound at residue E173. The segment at 197–200 is aspartate; the sequence is QLFK. An L-aspartate-binding site is contributed by R219. ATP contacts are provided by residues 219 to 221 and Q228; that span reads RDE. An L-aspartate-binding site is contributed by H456. E498 serves as a coordination point for ATP. Position 505 (R505) interacts with L-aspartate. Position 550 to 553 (550 to 553) interacts with ATP; the sequence is GLDR.

Belongs to the class-II aminoacyl-tRNA synthetase family. Type 1 subfamily. Homodimer.

The protein localises to the cytoplasm. The catalysed reaction is tRNA(Asx) + L-aspartate + ATP = L-aspartyl-tRNA(Asx) + AMP + diphosphate. Functionally, aspartyl-tRNA synthetase with relaxed tRNA specificity since it is able to aspartylate not only its cognate tRNA(Asp) but also tRNA(Asn). Reaction proceeds in two steps: L-aspartate is first activated by ATP to form Asp-AMP and then transferred to the acceptor end of tRNA(Asp/Asn). The sequence is that of Aspartate--tRNA(Asp/Asn) ligase from Magnetococcus marinus (strain ATCC BAA-1437 / JCM 17883 / MC-1).